A 674-amino-acid chain; its full sequence is Probable copper-transporting P-type ATPase B (674 aa).

Positions 1-22 (MNHSNQMHHDNHASHDHHSGHA) are disordered. Residues 7 to 19 (MHHDNHASHDHHS) show a composition bias toward basic and acidic residues. 6 helical membrane passes run 32–52 (FFVS…MGVN), 57–77 (FTFP…FFYG), 95–115 (GMMT…LYAF), 127–147 (TMDF…GHWI), 284–304 (GYLF…WMLI), and 315–335 (LVTV…PLVT). Catalysis depends on aspartate 367, which acts as the 4-aspartylphosphate intermediate. Mg(2+)-binding residues include aspartate 565 and aspartate 569. The next 2 helical transmembrane spans lie at 623 to 645 (LWWG…AFIG) and 649 to 671 (SPAI…AFTL).

The protein belongs to the cation transport ATPase (P-type) (TC 3.A.3) family. Type IB subfamily.

It is found in the cell membrane. The catalysed reaction is Cu(+)(in) + ATP + H2O = Cu(+)(out) + ADP + phosphate + H(+). Involved in copper transport. The polypeptide is Probable copper-transporting P-type ATPase B (copB) (Staphylococcus aureus (strain USA300 / TCH1516)).